Consider the following 258-residue polypeptide: Trans-aconitate 2-methyltransferase (258 aa).

Belongs to the methyltransferase superfamily. Tam family.

Its subcellular location is the cytoplasm. It carries out the reaction trans-aconitate + S-adenosyl-L-methionine = (E)-3-(methoxycarbonyl)pent-2-enedioate + S-adenosyl-L-homocysteine. In terms of biological role, catalyzes the S-adenosylmethionine monomethyl esterification of trans-aconitate. The sequence is that of Trans-aconitate 2-methyltransferase from Yersinia pseudotuberculosis serotype O:1b (strain IP 31758).